The sequence spans 35 residues: Riboflavin-binding protein (35 aa).

Cys-5 and Cys-32 are joined by a disulfide.

This sequence belongs to the folate receptor family.

Functionally, required for the transport of riboflavin to the developing oocyte. This is Riboflavin-binding protein from Struthio camelus (Common ostrich).